The primary structure comprises 200 residues: ATP-dependent Clp protease proteolytic subunit 1 (200 aa).

Ser102 acts as the Nucleophile in catalysis. His127 is an active-site residue.

This sequence belongs to the peptidase S14 family. In terms of assembly, fourteen ClpP subunits assemble into 2 heptameric rings which stack back to back to give a disk-like structure with a central cavity, resembling the structure of eukaryotic proteasomes.

It is found in the cytoplasm. The enzyme catalyses Hydrolysis of proteins to small peptides in the presence of ATP and magnesium. alpha-casein is the usual test substrate. In the absence of ATP, only oligopeptides shorter than five residues are hydrolyzed (such as succinyl-Leu-Tyr-|-NHMec, and Leu-Tyr-Leu-|-Tyr-Trp, in which cleavage of the -Tyr-|-Leu- and -Tyr-|-Trp bonds also occurs).. Cleaves peptides in various proteins in a process that requires ATP hydrolysis. Has a chymotrypsin-like activity. Plays a major role in the degradation of misfolded proteins. The protein is ATP-dependent Clp protease proteolytic subunit 1 of Bradyrhizobium diazoefficiens (strain JCM 10833 / BCRC 13528 / IAM 13628 / NBRC 14792 / USDA 110).